The chain runs to 399 residues: Exodeoxyribonuclease 7 large subunit (399 aa).

It belongs to the XseA family. Heterooligomer composed of large and small subunits.

It localises to the cytoplasm. The enzyme catalyses Exonucleolytic cleavage in either 5'- to 3'- or 3'- to 5'-direction to yield nucleoside 5'-phosphates.. In terms of biological role, bidirectionally degrades single-stranded DNA into large acid-insoluble oligonucleotides, which are then degraded further into small acid-soluble oligonucleotides. The sequence is that of Exodeoxyribonuclease 7 large subunit from Clostridium beijerinckii (strain ATCC 51743 / NCIMB 8052) (Clostridium acetobutylicum).